The chain runs to 150 residues: Galactose-binding lectin (150 aa).

H16 and G19 together coordinate D-galactose. N26 is a glycosylation site (N-linked (GlcNAc...) asparagine). D-galactose-binding positions include N27, 35–37 (DIH), H64, and G67. Residue N74 is glycosylated (N-linked (GlcNAc...) asparagine). Residues E75, 83-85 (DRH), H108, and G111 contribute to the D-galactose site. The N-linked (GlcNAc...) asparagine glycan is linked to N118. D-galactose-binding positions include N119 and 127–129 (DKH).

Monomer in solution. Homodimer in solution. Exists as a monomer in solution when a low concentration (0.001 mg/ml) of it is present. Homodimers start to appear at a concentration of 0.01 mg/ml and tetramers at a concentration of 0.1 mg/ml. Highly expressed in mantle and to a lesser extent in muscle, hepatopancreas, gill and hemocytes.

Its activity is regulated as follows. Bacterial binding activity is inhibited by D-galactose. Hemagglutinating activity is independent of divalent cations Ca2(+) or Mg2(+). It is strongly inhibited by N-acetyl-D-galactosamine (GalNAc), D-galactose and D-talose, and to a lesser extent by melibiose and raffinose. Also inhibited by glycoprotein asialo-bovine submaxillary mucin (BSM). Not inhibited by D-glucose, D-fucose, D-galactitol, N-acetyl-D-glucosamine or lactose. Fungal binding activity is inhibited by D-galactose. Cytotoxic activity against Raji cell line is completely inhibited by galactose, melibiose and raffinose, but not by glucose or lactose. Galactose inhibits binding to laminin and BSM, but not to collagen, gelatin or fibronectin. Functionally, galactose-binding lectin. Binds both alpha and beta anomer of galactose (Gal), but has a stronger interaction with the glycans having alpha Gal at the non-reducing end and binds beta Gal weakly only in highly branched glycans. Has high affinity to Galalpha1-4Galbeta1-4GlcNAc. Binds N-acetyl-2-deoxy-2-amino-galactose (2-deoxy-GalNAc). Binds N-acetylgalactosamine (GalNAc). Binds porcine stomach mucin (PSM) with high affinity. Binds galactosamine. Binds laminin, bovine submaxillary mucin (BSM), fibronectin, type I collagen and gelatin with a decreasing affinity, respectively. Has hemagglutinating activity towards human type A erythrocytes. Also hemagglutinates human type 0, B and AB erythrocytes as well as rabbit and mouse erythrocytes. Agglutinates both Gram-positive and Gram-negative bacteria including B.subtilis ATCC 6633, S.aureus ATCC 21027 and E.coli 3254, respectively. No agglutination activity towards Gram-positive S.amurskyense CMM 3673. Has bacteriostatic activity on S.amurskyense CMM 3673, B.subtilis ATCC 6633, S.aureus ATCC 21027 and E.coli 3254. However, has no agglutination nor bacteriostatic activity on Gram-negative C.scophthalmum CIP 104199 or A.troitsensis KMM 3674. Inhibits growth of fungi from the genera Aspergillus, Penicillium, Trichoderma and st. Mycelia. Inhibits germination of spores and hyphal growth of them. Has dose-dependent cytotoxic effect on the human globotriaosylceramide (Gb3)-expressing Burkitt's lymphoma (Raji) cell line. Binds to Gb3 in these cells leading to activation of caspase-9/3 and PARP. Has dose-dependent cytotoxic effect on the Gb3-expressing human MCF-7 breast cancer cell line. No cytotoxic effect on myelogenous leukemia K562 cell line, which does not express Gb3. Activates immune responses in mice and increases cytokine production of TNF-alpha, IL-6 and MCP-1 in the serum and the peritoneal lavage of mice. Induces TNF-alpha and IL-6 secretion in mouse RAW264.7 macrophages, mouse bone marrow-derived macrophages, human THP-1 macrophages, human peripheral blood mononuclear cells (PBMCs) and human blood monocyte-derived macrophages. TNF-alpha production in macrophages could not be inhibited by GalNAc, GalN or Gal, indicating that induced cytokine production is separate from its sugar binding activity. Increases intracellular reactive oxygen species levels, expression and phosphorylation of protein kinases PKC alpha/delta, expression of COX-2 and NF-kappaB, and activates the MAPK pathway by increasing the phosphorylation of ERK1/2, JNK1/2 and p38 in mouse RAW264.7 macrophages. Induces endotoxin tolerance in lipopolysaccharide(LPS)-activated macrophages by down-regulating IRAK2 expression, reducing JNK1/2 phosphorylation and NF-kappaB activation. Can slightly increase the bactericidal activity of RAW264.7 macrophages. Has DNA-binding activity. Recognizes pathogen-associated molecular patterns (PAMPs) and binds to LPS from E.coli, but has only little binding to beta-1,3-glucan from E.gracilis and peptidoglycan from S.aureus. Activates secretion of TNF-alpha and IFN-gamma by the human peripheral blood cells (HPBCs). May be involved in innate immunity acting as an antibacterial and antifungal agent involved in the recognition and clearance of pathogens. The polypeptide is Galactose-binding lectin (Crenomytilus grayanus (Gray mussel)).